Here is a 496-residue protein sequence, read N- to C-terminus: Probable cytosol aminopeptidase (496 aa).

Mn(2+)-binding residues include lysine 266 and aspartate 271. Residue lysine 278 is part of the active site. Mn(2+) contacts are provided by aspartate 289, aspartate 348, and glutamate 350. The active site involves arginine 352.

The protein belongs to the peptidase M17 family. Mn(2+) serves as cofactor.

It localises to the cytoplasm. It carries out the reaction Release of an N-terminal amino acid, Xaa-|-Yaa-, in which Xaa is preferably Leu, but may be other amino acids including Pro although not Arg or Lys, and Yaa may be Pro. Amino acid amides and methyl esters are also readily hydrolyzed, but rates on arylamides are exceedingly low.. The catalysed reaction is Release of an N-terminal amino acid, preferentially leucine, but not glutamic or aspartic acids.. In terms of biological role, presumably involved in the processing and regular turnover of intracellular proteins. Catalyzes the removal of unsubstituted N-terminal amino acids from various peptides. The sequence is that of Probable cytosol aminopeptidase from Pseudomonas syringae pv. syringae (strain B728a).